Reading from the N-terminus, the 362-residue chain is 3-isopropylmalate dehydrogenase (362 aa).

Gly76–Glu87 contacts NAD(+). Residues Arg94, Arg104, Arg133, and Asp222 each coordinate substrate. Asp222, Asp247, and Asp251 together coordinate Mg(2+). Position 286 to 297 (Gly286 to Asn297) interacts with NAD(+).

This sequence belongs to the isocitrate and isopropylmalate dehydrogenases family. Homodimer. Mg(2+) is required as a cofactor. The cofactor is Mn(2+).

Its subcellular location is the cytoplasm. The enzyme catalyses (2R,3S)-3-isopropylmalate + NAD(+) = 4-methyl-2-oxopentanoate + CO2 + NADH. It functions in the pathway amino-acid biosynthesis; L-leucine biosynthesis; L-leucine from 3-methyl-2-oxobutanoate: step 3/4. Functionally, catalyzes the oxidation of 3-carboxy-2-hydroxy-4-methylpentanoate (3-isopropylmalate) to 3-carboxy-4-methyl-2-oxopentanoate. The product decarboxylates to 4-methyl-2 oxopentanoate. In Pichia angusta (Yeast), this protein is 3-isopropylmalate dehydrogenase (LEU2).